The chain runs to 152 residues: Small ribosomal subunit protein uS15 (152 aa).

The span at 1–11 shows a compositional bias: basic residues; sequence MAKMHTKRKGK. Residues 1-22 are disordered; sequence MAKMHTKRKGKSSSTRPIRTEP.

This sequence belongs to the universal ribosomal protein uS15 family. In terms of assembly, part of the 30S ribosomal subunit.

The polypeptide is Small ribosomal subunit protein uS15 (Methanosarcina barkeri (strain Fusaro / DSM 804)).